We begin with the raw amino-acid sequence, 425 residues long: Glucan 1,3-beta-glucosidase (425 aa).

The signal sequence occupies residues 1-17 (MLLTFAPIFLLISSIVA). The active-site Proton donor is Glu-214. 2 cysteine pairs are disulfide-bonded: Cys-301–Cys-423 and Cys-326–Cys-352. The active-site Nucleophile is the Lys-328.

This sequence belongs to the glycosyl hydrolase 5 (cellulase A) family.

It localises to the secreted. It catalyses the reaction Successive hydrolysis of beta-D-glucose units from the non-reducing ends of (1-&gt;3)-beta-D-glucans, releasing alpha-glucose.. Functionally, beta-glucanases participate in the metabolism of beta-glucan, the main structural component of the cell wall. It could also function biosynthetically as a transglycosylase. The sequence is that of Glucan 1,3-beta-glucosidase (EXG1) from Candida oleophila (Yeast).